A 350-amino-acid polypeptide reads, in one-letter code: Protein-glutamate methylesterase/protein-glutamine glutaminase 1 (350 aa).

Residues 6–123 enclose the Response regulatory domain; sequence RVLVVDDSAL…GRSVENYAEE (118 aa). The residue at position 57 (aspartate 57) is a 4-aspartylphosphate. Positions 159-350 constitute a CheB-type methylesterase domain; sequence LGASGKIIFV…ARRVLGAVSA (192 aa). Active-site residues include serine 171, histidine 197, and aspartate 293.

It belongs to the CheB family. Phosphorylated by CheA. Phosphorylation of the N-terminal regulatory domain activates the methylesterase activity.

The protein resides in the cytoplasm. It catalyses the reaction [protein]-L-glutamate 5-O-methyl ester + H2O = L-glutamyl-[protein] + methanol + H(+). It carries out the reaction L-glutaminyl-[protein] + H2O = L-glutamyl-[protein] + NH4(+). Functionally, involved in chemotaxis. Part of a chemotaxis signal transduction system that modulates chemotaxis in response to various stimuli. Catalyzes the demethylation of specific methylglutamate residues introduced into the chemoreceptors (methyl-accepting chemotaxis proteins or MCP) by CheR. Also mediates the irreversible deamidation of specific glutamine residues to glutamic acid. The chain is Protein-glutamate methylesterase/protein-glutamine glutaminase 1 from Dechloromonas aromatica (strain RCB).